The chain runs to 500 residues: Endonuclease domain-containing 1 protein (500 aa).

A signal peptide spans 1 to 21; it reads MGTARWLALGSLFALAGLLEG. Positions 293–323 are disordered; the sequence is ERMVQSQKSSSPLSSTRSKRSTLLPPEASEG. Residues 297-317 show a composition bias toward low complexity; that stretch reads QSQKSSSPLSSTRSKRSTLLP. Lys407 carries the N6-acetyllysine modification.

Belongs to the DNA/RNA non-specific endonuclease family. As to quaternary structure, interacts with RNF26; this interaction is important to modulate innate immune signaling through the cGAS-STING pathway.

It is found in the secreted. Its function is as follows. May act as a DNase and a RNase. Plays a role in the modulation of innate immune signaling through the cGAS-STING pathway by interacting with RNF26. This Homo sapiens (Human) protein is Endonuclease domain-containing 1 protein (ENDOD1).